Consider the following 48-residue polypeptide: Small ribosomal subunit protein uS14 (48 aa).

Residues cysteine 13, cysteine 16, cysteine 31, and cysteine 34 each coordinate Zn(2+).

It belongs to the universal ribosomal protein uS14 family. Zinc-binding uS14 subfamily. Part of the 30S ribosomal subunit. Zn(2+) is required as a cofactor.

Its function is as follows. Binds 16S rRNA, required for the assembly of 30S particles. The protein is Small ribosomal subunit protein uS14 of Methanopyrus kandleri (strain AV19 / DSM 6324 / JCM 9639 / NBRC 100938).